Reading from the N-terminus, the 137-residue chain is LVAVCVSLLGAANIPPQPLNLYQLMNMIQCANTRTWPSYTNYGCYCGKGGSGTPVDDLDRCCYTHDHCYNDAKNIDGCNPVTKTYSYTCTEPTITCNDSKDKCARFVCDCDRTAAICFAKAPYNTSNVMIRSTNSCQ.

The N-terminal stretch at 1 to 11 (LVAVCVSLLGA) is a signal peptide. The propeptide occupies 12-19 (ANIPPQPL). Intrachain disulfides connect C30–C89, C44–C136, C46–C62, C61–C117, C68–C110, C78–C103, and C96–C108. Positions 45, 47, and 49 each coordinate Ca(2+). G49 and H65 together coordinate tridecanoate. H65 is an active-site residue. D66 is a binding site for Ca(2+). D111 is a catalytic residue.

In terms of assembly, monomer. The cofactor is Ca(2+). In terms of tissue distribution, expressed by the venom gland.

Its subcellular location is the secreted. It carries out the reaction a 1,2-diacyl-sn-glycero-3-phosphocholine + H2O = a 1-acyl-sn-glycero-3-phosphocholine + a fatty acid + H(+). Its function is as follows. Snake venom phospholipase A2 (PLA2) that shows anticoagulant and neurotoxic activities. PLA2 catalyzes the calcium-dependent hydrolysis of the 2-acyl groups in 3-sn-phosphoglycerides. In Bungarus caeruleus (Indian krait), this protein is Acidic phospholipase A2 1.